The sequence spans 339 residues: tRNA N6-adenosine threonylcarbamoyltransferase (339 aa).

Residues His111 and His115 each coordinate Fe cation. Substrate is bound by residues 134 to 138 (LVSGG), Asp167, Gly180, and Asn270. Asp298 is a binding site for Fe cation.

It belongs to the KAE1 / TsaD family. It depends on Fe(2+) as a cofactor.

It is found in the cytoplasm. It catalyses the reaction L-threonylcarbamoyladenylate + adenosine(37) in tRNA = N(6)-L-threonylcarbamoyladenosine(37) in tRNA + AMP + H(+). Required for the formation of a threonylcarbamoyl group on adenosine at position 37 (t(6)A37) in tRNAs that read codons beginning with adenine. Is involved in the transfer of the threonylcarbamoyl moiety of threonylcarbamoyl-AMP (TC-AMP) to the N6 group of A37, together with TsaE and TsaB. TsaD likely plays a direct catalytic role in this reaction. The sequence is that of tRNA N6-adenosine threonylcarbamoyltransferase from Alkalilimnicola ehrlichii (strain ATCC BAA-1101 / DSM 17681 / MLHE-1).